The primary structure comprises 498 residues: ATP synthase subunit beta, chloroplastic (498 aa).

172 to 179 contacts ATP; that stretch reads GGAGVGKT.

It belongs to the ATPase alpha/beta chains family. In terms of assembly, F-type ATPases have 2 components, CF(1) - the catalytic core - and CF(0) - the membrane proton channel. CF(1) has five subunits: alpha(3), beta(3), gamma(1), delta(1), epsilon(1). CF(0) has four main subunits: a(1), b(1), b'(1) and c(9-12).

Its subcellular location is the plastid. It localises to the chloroplast thylakoid membrane. It catalyses the reaction ATP + H2O + 4 H(+)(in) = ADP + phosphate + 5 H(+)(out). Produces ATP from ADP in the presence of a proton gradient across the membrane. The catalytic sites are hosted primarily by the beta subunits. This Saccharum hybrid (Sugarcane) protein is ATP synthase subunit beta, chloroplastic.